The following is a 132-amino-acid chain: Small ribosomal subunit protein uS8 (132 aa).

The protein belongs to the universal ribosomal protein uS8 family. Part of the 30S ribosomal subunit. Contacts proteins S5 and S12.

Functionally, one of the primary rRNA binding proteins, it binds directly to 16S rRNA central domain where it helps coordinate assembly of the platform of the 30S subunit. The polypeptide is Small ribosomal subunit protein uS8 (Xanthomonas axonopodis pv. citri (strain 306)).